The sequence spans 269 residues: Formamidopyrimidine-DNA glycosylase (269 aa).

Proline 2 acts as the Schiff-base intermediate with DNA in catalysis. Catalysis depends on glutamate 3, which acts as the Proton donor. The active-site Proton donor; for beta-elimination activity is the lysine 57. DNA is bound by residues histidine 90, arginine 109, and lysine 150. The segment at 235-269 (QVYGKGGKPCPRCDNPLSEMKIGQRASVFCSECQK) adopts an FPG-type zinc-finger fold. Arginine 259 serves as the catalytic Proton donor; for delta-elimination activity.

It belongs to the FPG family. In terms of assembly, monomer. It depends on Zn(2+) as a cofactor.

The catalysed reaction is Hydrolysis of DNA containing ring-opened 7-methylguanine residues, releasing 2,6-diamino-4-hydroxy-5-(N-methyl)formamidopyrimidine.. It carries out the reaction 2'-deoxyribonucleotide-(2'-deoxyribose 5'-phosphate)-2'-deoxyribonucleotide-DNA = a 3'-end 2'-deoxyribonucleotide-(2,3-dehydro-2,3-deoxyribose 5'-phosphate)-DNA + a 5'-end 5'-phospho-2'-deoxyribonucleoside-DNA + H(+). Functionally, involved in base excision repair of DNA damaged by oxidation or by mutagenic agents. Acts as a DNA glycosylase that recognizes and removes damaged bases. Has a preference for oxidized purines, such as 7,8-dihydro-8-oxoguanine (8-oxoG). Has AP (apurinic/apyrimidinic) lyase activity and introduces nicks in the DNA strand. Cleaves the DNA backbone by beta-delta elimination to generate a single-strand break at the site of the removed base with both 3'- and 5'-phosphates. In Photobacterium profundum (strain SS9), this protein is Formamidopyrimidine-DNA glycosylase.